The primary structure comprises 154 residues: Methylglyoxal synthase (154 aa).

The 149-residue stretch at 6 to 154 (SPLPANKAIA…AYMARRAQGN (149 aa)) folds into the MGS-like domain. Residues His19, Lys23, 45-48 (TGTT), and 65-66 (SG) contribute to the substrate site. Asp71 functions as the Proton donor/acceptor in the catalytic mechanism. Residue His98 coordinates substrate.

This sequence belongs to the methylglyoxal synthase family.

It catalyses the reaction dihydroxyacetone phosphate = methylglyoxal + phosphate. Its function is as follows. Catalyzes the formation of methylglyoxal from dihydroxyacetone phosphate. This is Methylglyoxal synthase from Cellvibrio japonicus (strain Ueda107) (Pseudomonas fluorescens subsp. cellulosa).